Here is a 530-residue protein sequence, read N- to C-terminus: Pre-mRNA-splicing factor PRP9 (530 aa).

A Matrin-type 1 zinc finger spans residues 280–310 (IYCPFCSRWFKTSSVFESHLVGKIHKKNESK). The interval 367–388 (DSTEKEGAEQVDGEQRDGQLQE) is disordered. Residues 368 to 388 (STEKEGAEQVDGEQRDGQLQE) show a composition bias toward basic and acidic residues. The Matrin-type 2 zinc-finger motif lies at 421–452 (YRCEICSNKVYNGRRTFERHFNEERHIYHLRC). A disordered region spans residues 488 to 516 (AVPPKPNPSQLKVPTELELEEEDEEGNVM). A compositionally biased stretch (acidic residues) spans 504–513 (LELEEEDEEG).

This sequence belongs to the SF3A3 family. Belongs to the CWC complex (or CEF1-associated complex), a spliceosome sub-complex reminiscent of a late-stage spliceosome composed of the U2, U5 and U6 snRNAs and at least BUD13, BUD31, BRR2, CDC40, CEF1, CLF1, CUS1, CWC2, CWC15, CWC21, CWC22, CWC23, CWC24, CWC25, CWC27, ECM2, HSH155, IST3, ISY1, LEA1, MSL1, NTC20, PRP8, PRP9, PRP11, PRP19, PRP21, PRP22, PRP45, PRP46, SLU7, SMB1, SMD1, SMD2, SMD3, SMX2, SMX3, SNT309, SNU114, SPP2, SYF1, SYF2, RSE1 and YJU2.

It localises to the nucleus. In terms of biological role, mRNA splicing factors, PRP9, PRP11, and PRP21, are necessary for binding of the U2 snRNP to the pre-mRNA in an early step of spliceosome assembly. In Saccharomyces cerevisiae (strain ATCC 204508 / S288c) (Baker's yeast), this protein is Pre-mRNA-splicing factor PRP9 (PRP9).